The following is a 963-amino-acid chain: Protein NLP2 (963 aa).

Residues 635 to 716 (RRPGEKRRTK…IDSVQGVQGS (82 aa)) form the RWP-RK domain. The segment covering 734-755 (MSGTGTSFKNPNAQTENGVSAQ) has biased composition (polar residues). A disordered region spans residues 734-794 (MSGTGTSFKN…QSTNTGTTSN (61 aa)). Over residues 756-794 (GTAAAPKSPPSSSCSHSSGSSTCCSTGANQSTNTGTTSN) the composition is skewed to low complexity. The PB1 domain maps to 862–945 (ASKVKATFGE…RTIKISVHEA (84 aa)).

It localises to the nucleus. Probable transcription factor. This chain is Protein NLP2 (NLP2), found in Arabidopsis thaliana (Mouse-ear cress).